Here is a 258-residue protein sequence, read N- to C-terminus: Capsid protein (258 aa).

The Bipartite nuclear localization signal signature appears at 3 to 20 (KRPGDIIISTPGSKVRRR). The Nuclear localization signal motif lies at 41 to 55 (RKRAWMNRPMYRKPM). A zinc finger lies at 69–86 (CEGPCKVQSFEQRDDVKH). A Nuclear export signal motif is present at residues 102-123 (LTHRVGKRFCIKSIYILGKIWM). Positions 202–249 (KRFYRLNHHVTYNHQEAGKYENHTENALLLYMACTHASNPVYATLKIR) match the Bipartite nuclear localization signal motif.

It belongs to the geminiviridae capsid protein family. Homomultimer. Binds to single-stranded and double-stranded viral DNA. Interacts (via nuclear localization signals) with host importin alpha-1a.

The protein resides in the virion. It localises to the host nucleus. Encapsidates the viral DNA into characteristic twinned ('geminate') particles. Binds the genomic viral ssDNA and shuttles it into and out of the cell nucleus. The CP of bipartite geminiviruses is not required for cell-to-cell or systemic movement. In Hewittia sublobata (Coralbush), this protein is Capsid protein.